We begin with the raw amino-acid sequence, 314 residues long: MSERKVLNKYYPPDFDPSKIPKLKLPKDRQYVVRLMAPFNMRCKTCGEYIYKGKKFNARKETVQNEAYLGLPIFRFYIKCTRCLAEITFKTDPENTDYTMEHGATRNFQAEKLLEEEEKRVQKEREDEELNNPMKVLENRTKDSKLEMEVLENLQELKDLNQRQAHVDFEAMLRQHRMSQEQWQQQQEEEDERETAALLEEARHRRLLEDSESEDEAPPSRPRAAARPNPTAILNEVPQTKRKAEALCSKAQLAGLVVPKKVKTEANGASEQVGVPTAAGAPKSRKADNPTPQTPGTSSLSQLGAYGDSEDSDS.

4 residues coordinate Zn(2+): cysteine 43, cysteine 46, cysteine 80, and cysteine 83. Disordered stretches follow at residues methionine 178–proline 238 and leucine 253–serine 314. The segment covering glutamate 200–glutamate 209 has biased composition (basic and acidic residues). Residues serine 211, serine 213, and serine 220 each carry the phosphoserine modification. A compositionally biased stretch (low complexity) spans proline 222–alanine 232. A compositionally biased stretch (polar residues) spans proline 290–glutamine 302. Residues serine 309, serine 312, and serine 314 each carry the phosphoserine modification.

Belongs to the CWC16 family. YJU2 subfamily. As to quaternary structure, component of the spliceosome. Present in the activated B complex, the catalytically activated B* complex which catalyzes the branching, the catalytic step 1 C complex catalyzing the exon ligation, and the postcatalytic P complex containing the ligated exons (mRNA) and the excised lariat intron.

It localises to the nucleus. Part of the spliceosome which catalyzes two sequential transesterification reactions, first the excision of the non-coding intron from pre-mRNA and then the ligation of the coding exons to form the mature mRNA. Plays a role in stabilizing the structure of the spliceosome catalytic core and docking of the branch helix into the active site, producing 5'-exon and lariat intron-3'-intermediates. May protect cells from TP53-dependent apoptosis upon dsDNA break damage through association with PRP19-CD5L complex. The sequence is that of Splicing factor YJU2 from Mus musculus (Mouse).